Reading from the N-terminus, the 1566-residue chain is Arginine-glutamic acid dipeptide repeats protein (1566 aa).

The segment covering 1–36 has biased composition (basic and acidic residues); sequence MTADKDKDKDKEKDRDRDRDREREKRDKARESENSR. The disordered stretch occupies residues 1 to 90; the sequence is MTADKDKDKD…KKKSRYERTD (90 aa). Residues S53 and S56 each carry the phosphoserine modification. A compositionally biased stretch (basic residues) spans 74 to 85; it reads KNKKKPPKKKSR. The 181-residue stretch at 103-283 folds into the BAH domain; sequence VVYRPGDCVY…PETRRLNSTQ (181 aa). Position 120 is a phosphothreonine (T120). 2 positions are modified to phosphoserine: S142 and S304. Residues 284-387 form the ELM2 domain; that stretch reads GEIRVGPSHQ…KALQRLVKKP (104 aa). The 53-residue stretch at 391–443 folds into the SANT domain; it reads LIEKCWTEDEVKRFVKGLRQYGKNFFRIRKELLPNKETGELITFYYYWKKTPE. Positions 464-495 are disordered; sequence TRTASTPVNTPSRPPSSEFLDLSSASEDDFDS. Over residues 465–474 the composition is skewed to polar residues; sequence RTASTPVNTP. Residues 479-488 are compositionally biased toward low complexity; sequence SSEFLDLSSA. The GATA-type zinc finger occupies 507–532; it reads CRHCFTTTSKDWHHGGRENILLCTDC. Residues 542-1133 form a disordered region; sequence LPPIEKPVDP…PSHASQSARF (592 aa). K560 participates in a covalent cross-link: Glycyl lysine isopeptide (Lys-Gly) (interchain with G-Cter in SUMO2). Residues S594, S600, and S613 each carry the phosphoserine modification. Positions 609–623 are enriched in low complexity; it reads SGRNSPSAASTSSND. The span at 624 to 640 shows a compositional bias: basic and acidic residues; that stretch reads SKAETVKKSAKKVKEEA. K637 is covalently cross-linked (Glycyl lysine isopeptide (Lys-Gly) (interchain with G-Cter in SUMO2)). Residues S642, S656, S675, and S679 each carry the phosphoserine modification. Basic and acidic residues predominate over residues 652–673; the sequence is EKVASDTEEADRTSSKKTKTQE. Over residues 688–708 the composition is skewed to basic and acidic residues; the sequence is SDSRSVNDEGSSDPKDIDQDN. The span at 709-720 shows a compositional bias: polar residues; the sequence is RSTSPSIPSPQD. Residues 726-751 show a composition bias toward low complexity; sequence DSSAQQQMLQAQPPALQAPTGVTPAP. Residues 752–767 are compositionally biased toward pro residues; it reads SSAPPGTPQLPTPGPT. Over residues 778 to 796 the composition is skewed to low complexity; the sequence is SPTASQAPNQPQAPTAPVP. A compositionally biased stretch (pro residues) spans 809–827; it reads QRPPSPHPPPHPSPHPPLQ. The segment covering 829–840 has biased composition (polar residues); that stretch reads LTGSAGQPSAPS. 2 stretches are compositionally biased toward low complexity: residues 843 to 865 and 897 to 913; these read QPPL…LLQH and SLQL…QQPP. Residues 914-940 show a composition bias toward pro residues; the sequence is REQPLPPAPLAMPHIKPPPTTPIPQLP. Over residues 970-980 the composition is skewed to low complexity; that stretch reads KPLSSLSTHHP. Over residues 1030 to 1052 the composition is skewed to pro residues; it reads PQPPFAQHPFVPGGPPPITPPTC. Low complexity predominate over residues 1053 to 1085; sequence PSTSTPPAGPGTSAQPPCSGAAASGGSIAGGSS. Phosphoserine is present on residues S1106, S1113, and S1115. Over residues 1106 to 1117 the composition is skewed to pro residues; that stretch reads SPPPPPRSPSPE. T1119 is modified (phosphothreonine). Positions 1156–1211 form a coiled coil; the sequence is GSKLAKKREEAIEKAKREAEQKAREEREREKEKEKEREREREREREAERAAKASSS. K1158 carries the post-translational modification N6-acetyllysine. The segment covering 1162–1206 has biased composition (basic and acidic residues); it reads KREEAIEKAKREAEQKAREEREREKEKEKEREREREREREAERAA. Residues 1162–1246 form a disordered region; the sequence is KREEAIEKAK…TTIAAVPPYI (85 aa). Y1259 bears the Phosphotyrosine mark. The residue at position 1266 (S1266) is a Phosphoserine.

In terms of assembly, interacts with HDAC1. Interacts with ATN1. Interaction with ATN1 is improved when the poly-Gln region of ATN1 is extended. Interacts with FAT1. Widely expressed. Expressed in tumor cell lines.

The protein localises to the nucleus. In terms of biological role, plays a role as a transcriptional repressor during development. May play a role in the control of cell survival. Overexpression of RERE recruits BAX to the nucleus particularly to POD and triggers caspase-3 activation, leading to cell death. This is Arginine-glutamic acid dipeptide repeats protein (RERE) from Homo sapiens (Human).